The primary structure comprises 378 residues: D-galactarolactone cycloisomerase (378 aa).

Mg(2+) is bound by residues Asp-194, Glu-220, and Glu-246. His-296 functions as the Proton acceptor in the catalytic mechanism.

This sequence belongs to the mandelate racemase/muconate lactonizing enzyme family. Homooctamer. Mg(2+) serves as cofactor.

The enzyme catalyses D-glucaro-1,4-lactone = 5-dehydro-4-deoxy-D-glucarate + H(+). It carries out the reaction D-galactaro-1,4-lactone = 5-dehydro-4-deoxy-D-glucarate + H(+). The protein operates within carbohydrate acid metabolism; D-galacturonate degradation via prokaryotic oxidative pathway. Functionally, catalyzes the ring opening of D-galactaro-1,4-lactone to yield 5-keto-4-deoxy-D-glucarate (KDG) via a beta-elimination reaction. This is a step in the oxidative degradation pathway of D-galacturonate, which allows A.tumefaciens to utilize D-galacturonate as a sole carbon source. To a lesser extent, can also use D-glucaro-1,4-lactone as substrate to produce KDG, but cannot use D-galactaro-1,5-lactone, D-glucaro-6,3-lactone and linear D-glucarate. This is D-galactarolactone cycloisomerase (gci) from Agrobacterium fabrum (strain C58 / ATCC 33970) (Agrobacterium tumefaciens (strain C58)).